The chain runs to 163 residues: MRHGKKINHLSRQTGHRKAMLANMACSLIEHKRINTTVAKAKALKQFVEPLITKSKEDTTHNRRIVFAYLRSKYAVTDLFRDVAAKVGDRPGGYTRIIKVGNRLGDNADMAMIELVDFNELYNGGKKEVKKAKSRRGGKAKKAEGTAPEAPAAESESTTEASE.

The tract at residues 127 to 163 (KEVKKAKSRRGGKAKKAEGTAPEAPAAESESTTEASE) is disordered. The segment covering 128–140 (EVKKAKSRRGGKA) has biased composition (basic residues). The span at 145 to 163 (GTAPEAPAAESESTTEASE) shows a compositional bias: low complexity.

The protein belongs to the bacterial ribosomal protein bL17 family. In terms of assembly, part of the 50S ribosomal subunit. Contacts protein L32.

This is Large ribosomal subunit protein bL17 from Flavobacterium johnsoniae (strain ATCC 17061 / DSM 2064 / JCM 8514 / BCRC 14874 / CCUG 350202 / NBRC 14942 / NCIMB 11054 / UW101) (Cytophaga johnsonae).